Consider the following 329-residue polypeptide: Trans-1,2-dihydrobenzene-1,2-diol dehydrogenase (329 aa).

This sequence belongs to the Gfo/Idh/MocA family. Homodimer. In terms of tissue distribution, lens, liver and small intestine.

The catalysed reaction is (1R,2R)-1,2-dihydrobenzene-1,2-diol + NADP(+) = catechol + NADPH + H(+). The enzyme catalyses D-xylose + NADP(+) = D-xylono-1,5-lactone + NADPH + H(+). Its activity is regulated as follows. Stimulated by various salts. In Oryctolagus cuniculus (Rabbit), this protein is Trans-1,2-dihydrobenzene-1,2-diol dehydrogenase (DHDH).